A 164-amino-acid chain; its full sequence is Transcription elongation factor GreA (164 aa).

It belongs to the GreA/GreB family.

Its function is as follows. Necessary for efficient RNA polymerase transcription elongation past template-encoded arresting sites. The arresting sites in DNA have the property of trapping a certain fraction of elongating RNA polymerases that pass through, resulting in locked ternary complexes. Cleavage of the nascent transcript by cleavage factors such as GreA or GreB allows the resumption of elongation from the new 3'terminus. GreA releases sequences of 2 to 3 nucleotides. This is Transcription elongation factor GreA from Helicobacter pylori (strain Shi470).